Here is a 130-residue protein sequence, read N- to C-terminus: uncharacterized protein (130 aa).

Positions 1–23 are cleaved as a signal peptide; it reads MINRKVVYALSALLLFVYSYAFI.

This is an uncharacterized protein from Aquifex aeolicus (strain VF5).